The chain runs to 645 residues: Developmental regulatory protein wetA (645 aa).

5 disordered regions span residues 158 to 187 (SLHS…RKPK), 201 to 249 (TNLR…VSPP), 284 to 376 (YYGQ…QMHW), 461 to 578 (AQTF…DGAS), and 596 to 618 (GVAP…DRRR). Positions 240-249 (TQGNLPVSPP) are enriched in polar residues. 2 stretches are compositionally biased toward basic residues: residues 315–326 (QHHHHPHHHHQQ) and 351–361 (QHQHQHHHQQQ). Residues 362–373 (QHHQQQQQQQHQ) are compositionally biased toward low complexity. Residues 509 to 518 (GPSSSPTPAD) show a composition bias toward polar residues. Low complexity predominate over residues 528 to 546 (SSGASVSSLRSSSGRLPAS). Positions 562-572 (ISGSNSATSLG) are enriched in polar residues.

It belongs to the wetA family.

Functionally, brlA, abaA and wetA are pivotal regulators of conidiophore development and conidium maturation. They act individually and together to regulate their own expression and that of numerous other sporulation-specific genes. BrlA, abaA and wetA act together to positively regulate the expression of the Pks1 gene cluster that mediates the biosynthesis of an anthraquinone derivative pigment that contributes to conidial pigmentation that provides protection from UV radiation, heat and cold stress. The chain is Developmental regulatory protein wetA from Metarhizium robertsii (strain ARSEF 23 / ATCC MYA-3075) (Metarhizium anisopliae (strain ARSEF 23)).